The primary structure comprises 150 residues: Transcriptional repressor NrdR (150 aa).

The segment at 3–34 is a zinc-finger region; sequence CPFCGYEDTFVIDTREIEDQKVIRRRRECPNC. An ATP-cone domain is found at 49 to 139; the sequence is IMVIKKDGRR…VYQEFSSLEE (91 aa).

This sequence belongs to the NrdR family. The cofactor is Zn(2+).

Negatively regulates transcription of bacterial ribonucleotide reductase nrd genes and operons by binding to NrdR-boxes. This chain is Transcriptional repressor NrdR, found in Dictyoglomus turgidum (strain DSM 6724 / Z-1310).